A 434-amino-acid polypeptide reads, in one-letter code: Nicotinate phosphoribosyltransferase (434 aa).

H242 carries the phosphohistidine; by autocatalysis modification.

Belongs to the NAPRTase family. In terms of processing, transiently phosphorylated on a His residue during the reaction cycle. Phosphorylation strongly increases the affinity for substrates and increases the rate of nicotinate D-ribonucleotide production. Dephosphorylation regenerates the low-affinity form of the enzyme, leading to product release.

It carries out the reaction nicotinate + 5-phospho-alpha-D-ribose 1-diphosphate + ATP + H2O = nicotinate beta-D-ribonucleotide + ADP + phosphate + diphosphate. The protein operates within cofactor biosynthesis; NAD(+) biosynthesis; nicotinate D-ribonucleotide from nicotinate: step 1/1. Functionally, catalyzes the synthesis of beta-nicotinate D-ribonucleotide from nicotinate and 5-phospho-D-ribose 1-phosphate at the expense of ATP. The protein is Nicotinate phosphoribosyltransferase of Rhizobium etli (strain CIAT 652).